A 95-amino-acid polypeptide reads, in one-letter code: Osteocalcin 1 (95 aa).

Residues 1–21 form the signal peptide; that stretch reads MKTLSVLVLCSLAVLCLTSDA. Positions 22–50 are excised as a propeptide; that stretch reads SFSSQPAVDTPAQEGLFVEQEQASSVVRQ. Positions 45 to 91 constitute a Gla domain; the sequence is SSVVRQAPKELSLSQLESLREVCELNLACEDMMDTSGIIAAYTTYYG. Ca(2+) contacts are provided by Glu-61, Glu-65, and Glu-68. 3 positions are modified to 4-carboxyglutamate: Glu-61, Glu-65, and Glu-68. A disulfide bridge connects residues Cys-67 and Cys-73.

This sequence belongs to the osteocalcin/matrix Gla protein family. Post-translationally, gamma-carboxyglutamate residues are formed by vitamin K dependent carboxylation by GGCX. These residues are essential for the binding of calcium.

It is found in the secreted. The carboxylated form is one of the main organic components of the bone matrix, which constitutes 1-2% of the total bone protein. The carboxylated form binds strongly to apatite and calcium. In Solea senegalensis (Senegalese sole), this protein is Osteocalcin 1.